Reading from the N-terminus, the 606-residue chain is 4-hydroxy-3-methylbut-2-en-1-yl diphosphate synthase (flavodoxin) (606 aa).

[4Fe-4S] cluster contacts are provided by Cys-513, Cys-516, Cys-547, and Glu-554.

It belongs to the IspG family. Requires [4Fe-4S] cluster as cofactor.

It catalyses the reaction (2E)-4-hydroxy-3-methylbut-2-enyl diphosphate + oxidized [flavodoxin] + H2O + 2 H(+) = 2-C-methyl-D-erythritol 2,4-cyclic diphosphate + reduced [flavodoxin]. The protein operates within isoprenoid biosynthesis; isopentenyl diphosphate biosynthesis via DXP pathway; isopentenyl diphosphate from 1-deoxy-D-xylulose 5-phosphate: step 5/6. In terms of biological role, converts 2C-methyl-D-erythritol 2,4-cyclodiphosphate (ME-2,4cPP) into 1-hydroxy-2-methyl-2-(E)-butenyl 4-diphosphate. The protein is 4-hydroxy-3-methylbut-2-en-1-yl diphosphate synthase (flavodoxin) of Chlamydia caviae (strain ATCC VR-813 / DSM 19441 / 03DC25 / GPIC) (Chlamydophila caviae).